We begin with the raw amino-acid sequence, 589 residues long: Arylsulfatase L (589 aa).

The signal sequence occupies residues 1–31; the sequence is MLHLHHSCLCFRSWLPAMLAVLLSLAPSASS. Ca(2+) contacts are provided by D46 and D47. N58 is a glycosylation site (N-linked (GlcNAc...) asparagine). Ca(2+) is bound at residue C86. C86 functions as the Nucleophile in the catalytic mechanism. A 3-oxoalanine (Cys) modification is found at C86. N125 carries an N-linked (GlcNAc...) asparagine glycan. Substrate is bound at residue K145. H147 is an active-site residue. N-linked (GlcNAc...) asparagine glycosylation is present at N258. H301 is a substrate binding site. The N-linked (GlcNAc...) asparagine glycan is linked to N344. Ca(2+) is bound by residues D353 and H354. A substrate-binding site is contributed by K378.

The protein belongs to the sulfatase family. Ca(2+) is required as a cofactor. In terms of processing, N-glycosylated. Post-translationally, the conversion to 3-oxoalanine (also known as C-formylglycine, FGly), of a serine or cysteine residue in prokaryotes and of a cysteine residue in eukaryotes, is critical for catalytic activity. As to expression, expressed in the pancreas, liver and kidney.

The protein localises to the golgi apparatus. The protein resides in the golgi stack. The enzyme catalyses an aryl sulfate + H2O = a phenol + sulfate + H(+). Inhibited by millimolar concentrations of warfarin. Functionally, exhibits arylsulfatase activity towards the artificial substrate 4-methylumbelliferyl sulfate. May be essential for the correct composition of cartilage and bone matrix during development. Has no activity toward steroid sulfates. In Homo sapiens (Human), this protein is Arylsulfatase L.